The sequence spans 333 residues: tRNA N6-adenosine threonylcarbamoyltransferase (333 aa).

Fe cation contacts are provided by H118 and H122. Residues 140–144, D173, G186, and N274 contribute to the substrate site; that span reads VVSGG. D298 lines the Fe cation pocket.

Belongs to the KAE1 / TsaD family. Fe(2+) serves as cofactor.

The protein localises to the cytoplasm. It catalyses the reaction L-threonylcarbamoyladenylate + adenosine(37) in tRNA = N(6)-L-threonylcarbamoyladenosine(37) in tRNA + AMP + H(+). Required for the formation of a threonylcarbamoyl group on adenosine at position 37 (t(6)A37) in tRNAs that read codons beginning with adenine. Is involved in the transfer of the threonylcarbamoyl moiety of threonylcarbamoyl-AMP (TC-AMP) to the N6 group of A37, together with TsaE and TsaB. TsaD likely plays a direct catalytic role in this reaction. This chain is tRNA N6-adenosine threonylcarbamoyltransferase, found in Deinococcus geothermalis (strain DSM 11300 / CIP 105573 / AG-3a).